The sequence spans 145 residues: CBS domain-containing protein DDB_G0289609 (145 aa).

CBS domains follow at residues 9–66 (MSKS…FLPE) and 84–141 (MKQN…LEPV).

This is CBS domain-containing protein DDB_G0289609 from Dictyostelium discoideum (Social amoeba).